Consider the following 118-residue polypeptide: Large ribosomal subunit protein uL24c (118 aa).

It belongs to the universal ribosomal protein uL24 family. Part of the 50S ribosomal subunit.

Its subcellular location is the plastid. It is found in the organellar chromatophore. Its function is as follows. One of two assembly initiator proteins, it binds directly to the 5'-end of the 23S rRNA, where it nucleates assembly of the 50S subunit. The polypeptide is Large ribosomal subunit protein uL24c (rpl24) (Paulinella chromatophora).